The chain runs to 87 residues: Small ribosomal subunit protein uS17 (87 aa).

It belongs to the universal ribosomal protein uS17 family. As to quaternary structure, part of the 30S ribosomal subunit.

In terms of biological role, one of the primary rRNA binding proteins, it binds specifically to the 5'-end of 16S ribosomal RNA. The polypeptide is Small ribosomal subunit protein uS17 (Neisseria meningitidis serogroup C (strain 053442)).